We begin with the raw amino-acid sequence, 196 residues long: 3-isopropylmalate dehydratase small subunit (196 aa).

It belongs to the LeuD family. LeuD type 1 subfamily. As to quaternary structure, heterodimer of LeuC and LeuD.

The catalysed reaction is (2R,3S)-3-isopropylmalate = (2S)-2-isopropylmalate. The protein operates within amino-acid biosynthesis; L-leucine biosynthesis; L-leucine from 3-methyl-2-oxobutanoate: step 2/4. Catalyzes the isomerization between 2-isopropylmalate and 3-isopropylmalate, via the formation of 2-isopropylmaleate. The polypeptide is 3-isopropylmalate dehydratase small subunit (Corynebacterium diphtheriae (strain ATCC 700971 / NCTC 13129 / Biotype gravis)).